Reading from the N-terminus, the 373-residue chain is Histidinol-phosphate aminotransferase (373 aa).

N6-(pyridoxal phosphate)lysine is present on K231.

The protein belongs to the class-II pyridoxal-phosphate-dependent aminotransferase family. Histidinol-phosphate aminotransferase subfamily. Pyridoxal 5'-phosphate serves as cofactor.

The enzyme catalyses L-histidinol phosphate + 2-oxoglutarate = 3-(imidazol-4-yl)-2-oxopropyl phosphate + L-glutamate. It functions in the pathway amino-acid biosynthesis; L-histidine biosynthesis; L-histidine from 5-phospho-alpha-D-ribose 1-diphosphate: step 7/9. The chain is Histidinol-phosphate aminotransferase (hisC) from Methanocaldococcus jannaschii (strain ATCC 43067 / DSM 2661 / JAL-1 / JCM 10045 / NBRC 100440) (Methanococcus jannaschii).